Reading from the N-terminus, the 336-residue chain is 3-isopropylmalate dehydrogenase (336 aa).

4 residues coordinate substrate: Arg-87, Arg-97, Arg-121, and Asp-211. Mg(2+) contacts are provided by Asp-211, Asp-235, and Asp-239. Gly-271–Asp-283 contributes to the NAD(+) binding site.

This sequence belongs to the isocitrate and isopropylmalate dehydrogenases family. LeuB type 2 subfamily. As to quaternary structure, homodimer. Requires Mg(2+) as cofactor. Mn(2+) serves as cofactor.

It localises to the cytoplasm. It catalyses the reaction (2R,3S)-3-isopropylmalate + NAD(+) = 4-methyl-2-oxopentanoate + CO2 + NADH. The protein operates within amino-acid biosynthesis; L-leucine biosynthesis; L-leucine from 3-methyl-2-oxobutanoate: step 3/4. Its function is as follows. Catalyzes the oxidation of 3-carboxy-2-hydroxy-4-methylpentanoate (3-isopropylmalate) to 3-carboxy-4-methyl-2-oxopentanoate. The product decarboxylates to 4-methyl-2 oxopentanoate. The protein is 3-isopropylmalate dehydrogenase (leuB) of Mycobacterium tuberculosis (strain CDC 1551 / Oshkosh).